The following is a 188-amino-acid chain: Pyridoxal 5'-phosphate synthase subunit PdxT (188 aa).

An L-glutamine-binding site is contributed by 46–48 (GES). Residue Cys-78 is the Nucleophile of the active site. Residues Arg-105 and 134–135 (IR) each bind L-glutamine. Catalysis depends on charge relay system residues His-170 and Glu-172.

Belongs to the glutaminase PdxT/SNO family. In terms of assembly, in the presence of PdxS, forms a dodecamer of heterodimers. Only shows activity in the heterodimer.

The enzyme catalyses aldehydo-D-ribose 5-phosphate + D-glyceraldehyde 3-phosphate + L-glutamine = pyridoxal 5'-phosphate + L-glutamate + phosphate + 3 H2O + H(+). It carries out the reaction L-glutamine + H2O = L-glutamate + NH4(+). It functions in the pathway cofactor biosynthesis; pyridoxal 5'-phosphate biosynthesis. Its function is as follows. Catalyzes the hydrolysis of glutamine to glutamate and ammonia as part of the biosynthesis of pyridoxal 5'-phosphate. The resulting ammonia molecule is channeled to the active site of PdxS. The chain is Pyridoxal 5'-phosphate synthase subunit PdxT from Clostridium kluyveri (strain ATCC 8527 / DSM 555 / NBRC 12016 / NCIMB 10680 / K1).